A 112-amino-acid chain; its full sequence is MCGDCVEKEYPNRGTTCLENGSFLLNFAGCAVCSKRDFMLITNRSLKEEDGEEIVTYDHLCKNCHHVVARHEYTFSIMDEFQEYTMLCLLCGKAEDTISILPDDPRQMTLLF.

Positions 2, 5, 30, 33, 59, 61, 64, 66, 71, 88, and 91 each coordinate Zn(2+).

The protein belongs to the Churchill family.

Functionally, transcriptional activator that mediates FGF signaling during neural development. Plays a role in the regulation of cell movement. Does not bind DNA by itself. This chain is Protein Churchill (Churc1), found in Mus musculus (Mouse).